The sequence spans 265 residues: Phosphonates import ATP-binding protein PhnC 1 (265 aa).

Residues 3 to 247 (LRLSAIELRH…HLDTLYANEQ (245 aa)) enclose the ABC transporter domain. 36 to 43 (GPSGAGKT) is a binding site for ATP.

This sequence belongs to the ABC transporter superfamily. Phosphonates importer (TC 3.A.1.9.1) family. In terms of assembly, the complex is composed of two ATP-binding proteins (PhnC), two transmembrane proteins (PhnE) and a solute-binding protein (PhnD).

It is found in the cell inner membrane. The enzyme catalyses phosphonate(out) + ATP + H2O = phosphonate(in) + ADP + phosphate + H(+). Its function is as follows. Part of the ABC transporter complex PhnCDE involved in phosphonates import. Responsible for energy coupling to the transport system. The protein is Phosphonates import ATP-binding protein PhnC 1 of Pseudomonas syringae pv. syringae (strain B728a).